We begin with the raw amino-acid sequence, 204 residues long: Protein OPG030 (204 aa).

The BACK domain maps to 95-177; that stretch reads FLRQYINNNI…ITYSELTNAI (83 aa).

The protein belongs to the orthopoxvirus OPG030 family.

The chain is Protein OPG030 (OPG30) from Bos taurus (Bovine).